Here is a 180-residue protein sequence, read N- to C-terminus: Large ribosomal subunit protein uL5 (180 aa).

It belongs to the universal ribosomal protein uL5 family. In terms of assembly, part of the 50S ribosomal subunit; part of the 5S rRNA/L5/L18/L25 subcomplex. Contacts the 5S rRNA and the P site tRNA. Forms a bridge to the 30S subunit in the 70S ribosome.

This is one of the proteins that bind and probably mediate the attachment of the 5S RNA into the large ribosomal subunit, where it forms part of the central protuberance. In the 70S ribosome it contacts protein S13 of the 30S subunit (bridge B1b), connecting the 2 subunits; this bridge is implicated in subunit movement. Contacts the P site tRNA; the 5S rRNA and some of its associated proteins might help stabilize positioning of ribosome-bound tRNAs. The sequence is that of Large ribosomal subunit protein uL5 from Streptococcus pyogenes serotype M1.